Consider the following 1259-residue polypeptide: uncharacterized protein (1259 aa).

The segment at 354-410 (KLNQAGGKRNSSMNNSTQNNNSSRSNNSARNNNSVWNNNNSAWKNNNSAWNDNSSWK) is disordered. Low complexity predominate over residues 362 to 410 (RNSSMNNSTQNNNSSRSNNSARNNNSVWNNNNSAWKNNNSAWNDNSSWK).

The protein resides in the virion. This is an uncharacterized protein from Acanthamoeba polyphaga (Amoeba).